Here is a 442-residue protein sequence, read N- to C-terminus: Endothelin receptor type B (442 aa).

Positions 1–26 are cleaved as a signal peptide; it reads MQPPPSLCGRALVALVLACGLSRIWG. At 27 to 101 the chain is on the extracellular side; that stretch reads EERGFPPDRA…GSIEIKETFK (75 aa). N-linked (GlcNAc...) asparagine glycosylation occurs at Asn59. The segment at 69-88 is disordered; that stretch reads AEVPKGDRTAGSPPRTISPP. The helical transmembrane segment at 102–126 threads the bilayer; it reads YINTVVSCLVFVLGIIGNSTLLRII. Over 127–137 the chain is Cytoplasmic; sequence YKNKCMRNGPN. A helical membrane pass occupies residues 138–163; the sequence is ILIASLALGDLLHIIIDIPITVYKLL. Over 164–175 the chain is Extracellular; the sequence is AEDWPFGVEMCK. The cysteines at positions 174 and 255 are disulfide-linked. A helical membrane pass occupies residues 176–197; that stretch reads LVPFIQKASVGITVLSLCALSI. The Cytoplasmic segment spans residues 198 to 218; it reads DRYRAVASWSRIKGIGVPKWT. Residues 219–243 form a helical membrane-spanning segment; sequence AVEIVLIWVVSVVLAVPEAVGFDMI. Residues 244 to 271 lie on the Extracellular side of the membrane; it reads TIDYKGRYLRICLLHPTQKTAFMQFYKT. The helical transmembrane segment at 272-296 threads the bilayer; it reads AKDWWLFSFYFCLPLAITAFFYTLM. Topologically, residues 297–324 are cytoplasmic; it reads TCEMLRKKSGMQIALNDHLKQRREVAKT. Ser305 is subject to Phosphoserine. A helical transmembrane segment spans residues 325 to 350; it reads VFCLVLVFALCWLPLHLSRILKLTIY. Over 351–362 the chain is Extracellular; the sequence is DQNDPNRCELLS. Residues 363 to 389 form a helical membrane-spanning segment; that stretch reads FLLVLDYIGINMASLNSCINPIALYLV. The Cytoplasmic portion of the chain corresponds to 390 to 442; sequence SKRFKNCFKSCLCCWCQSFEEKQSLEEKQSCLKFKANDHGYDNFRSSNKYSSS. 3 S-palmitoyl cysteine lipidation sites follow: Cys402, Cys403, and Cys405. Phosphoserine is present on Ser419. The residue at position 439 (Tyr439) is a Phosphotyrosine. A phosphoserine mark is found at Ser440, Ser441, and Ser442.

Belongs to the G-protein coupled receptor 1 family. Endothelin receptor subfamily. EDNRB sub-subfamily.

The protein localises to the cell membrane. In terms of biological role, non-specific receptor for endothelin 1, 2, and 3. Mediates its action by association with G proteins that activate a phosphatidylinositol-calcium second messenger system. The sequence is that of Endothelin receptor type B (EDNRB) from Canis lupus familiaris (Dog).